We begin with the raw amino-acid sequence, 698 residues long: Sulfhydryl oxidase 2 (698 aa).

The first 21 residues, 1 to 21 (MAAAGAAVARSPGIGAGPALR), serve as a signal peptide directing secretion. The Thioredoxin domain maps to 34 to 178 (PRLLVLLAAA…RQTMIDFLQN (145 aa)). N77 carries an N-linked (GlcNAc...) asparagine glycan. Active-site nucleophile residues include C91 and C94. 2 disulfide bridges follow: C91/C94 and C122/C131. N178, N218, and N266 each carry an N-linked (GlcNAc...) asparagine glycan. C418 and C430 are oxidised to a cystine. The ERV/ALR sulfhydryl oxidase domain maps to 421 to 530 (SRSELRGYPC…EDPRFPKLQW (110 aa)). FAD contacts are provided by residues R426, W433, H437, E478, H482, 505–512 (WKKHNMVN), K527, and W530. A disulfide bond links C476 and C479. A disulfide bridge connects residues C536 and C539. Residues 570–624 (TYSADQGDSSEGGTLARGEEEEKRLTPPEVSHGDRDTQSVRPPGALGPRPALPES) are disordered. A compositionally biased stretch (polar residues) spans 572 to 581 (SADQGDSSEG). At S579 the chain carries Phosphoserine. Positions 586–607 (RGEEEEKRLTPPEVSHGDRDTQ) are enriched in basic and acidic residues. Over residues 610–622 (RPPGALGPRPALP) the composition is skewed to low complexity. The helical transmembrane segment at 662–682 (SLCVVLYVASSLFLMVMYFFF) threads the bilayer.

Belongs to the quiescin-sulfhydryl oxidase (QSOX) family. Requires FAD as cofactor. Expressed in pancreas, brain, placenta, kidney, heart and fetal tissues. Weakly expressed in lung, liver and skeletal muscles.

It localises to the membrane. Its subcellular location is the secreted. The protein localises to the cell membrane. It is found in the nucleus membrane. The catalysed reaction is 2 R'C(R)SH + O2 = R'C(R)S-S(R)CR' + H2O2. Its function is as follows. Catalyzes the oxidation of sulfhydryl groups in peptide and protein thiols to disulfides with the reduction of oxygen to hydrogen peroxide. May contribute to disulfide bond formation in a variety of secreted proteins. Also seems to play a role in regulating the sensitization of neuroblastoma cells for interferon-gamma-induced apoptosis. The polypeptide is Sulfhydryl oxidase 2 (QSOX2) (Homo sapiens (Human)).